The primary structure comprises 59 residues: Potassium channel toxin alpha-KTx 1.12 (59 aa).

The first 22 residues, 1 to 22 (MKILSVLLLALIICSIVGWSEA), serve as a signal peptide directing secretion. Position 23 is a pyrrolidone carboxylic acid (Gln-23). 3 disulfides stabilise this stretch: Cys-29–Cys-50, Cys-35–Cys-55, and Cys-39–Cys-57. The interaction with Ca(2+)-activated K(+) channels stretch occupies residues 48–55 (GKCMNKKC).

This sequence belongs to the short scorpion toxin superfamily. Potassium channel inhibitor family. Alpha-KTx 01 subfamily. As to expression, expressed by the venom gland.

It localises to the secreted. Functionally, potent selective inhibitor of high conductance (maxi-K), different medium and small conductance calcium-activated potassium channels (KCa1.1/KCNMA1 and others), as well as a voltage-dependent potassium channel (Kv1.3/KCNA3&gt;Kv1.2/KCNA2&gt;Kv1.6/KCNA3&gt;&gt;Shaker/Sh). It blocks channel activity by a simple bimolecular inhibition process. Its function is as follows. Has a pH-specific antimicrobial activity against bacteria (B.subtilis, E.coli and S.aureus) and the fungus C.albicans. The polypeptide is Potassium channel toxin alpha-KTx 1.12 (Leiurus hebraeus (Hebrew deathstalker scorpion)).